The chain runs to 201 residues: Outer-membrane lipoprotein carrier protein (201 aa).

An N-terminal signal peptide occupies residues 1–21 (MKKVLLTVCAIALFGSQAAWA).

This sequence belongs to the LolA family. Monomer.

The protein localises to the periplasm. In terms of biological role, participates in the translocation of lipoproteins from the inner membrane to the outer membrane. Only forms a complex with a lipoprotein if the residue after the N-terminal Cys is not an aspartate (The Asp acts as a targeting signal to indicate that the lipoprotein should stay in the inner membrane). This Proteus mirabilis (strain HI4320) protein is Outer-membrane lipoprotein carrier protein.